The chain runs to 485 residues: ATP synthase subunit beta (485 aa).

158-165 (GGAGVGKT) contacts ATP.

This sequence belongs to the ATPase alpha/beta chains family. F-type ATPases have 2 components, CF(1) - the catalytic core - and CF(0) - the membrane proton channel. CF(1) has five subunits: alpha(3), beta(3), gamma(1), delta(1), epsilon(1). CF(0) has four main subunits: a(1), b(1), b'(1) and c(9-12).

Its subcellular location is the cell inner membrane. It catalyses the reaction ATP + H2O + 4 H(+)(in) = ADP + phosphate + 5 H(+)(out). In terms of biological role, produces ATP from ADP in the presence of a proton gradient across the membrane. The catalytic sites are hosted primarily by the beta subunits. The protein is ATP synthase subunit beta of Erythrobacter litoralis (strain HTCC2594).